Reading from the N-terminus, the 146-residue chain is Single-stranded DNA-binding protein, mitochondrial (146 aa).

The transit peptide at 1-16 (MLRNASAQILKQFVRH) directs the protein to the mitochondrion. The SSB domain maps to 29–140 (INKVQILGRV…IIADNIVFLS (112 aa)).

It is found in the mitochondrion. The protein localises to the mitochondrion matrix. Its subcellular location is the mitochondrion nucleoid. Its function is as follows. Binds preferentially and cooperatively to pyrimidine rich single-stranded DNA (ss-DNA). May be required to maintain the copy number of mitochondrial DNA (mtDNA) and play a crucial role during mtDNA replication. Required for retinal ganglion cell differentiation and retinal integrity. The sequence is that of Single-stranded DNA-binding protein, mitochondrial from Danio rerio (Zebrafish).